We begin with the raw amino-acid sequence, 507 residues long: RNA-binding protein Nova-1 (507 aa).

Residues 1–44 (MMAAAPIQQNGTHTGVPIDLDPPDSRKRPLEAPPEAGSTKRTNT) are disordered. The Bipartite nuclear localization signal motif lies at 27 to 43 (KRPLEAPPEAGSTKRTN). A KH 1 domain is found at 49–116 (QYFLKVLIPS…EALNAVHGFI (68 aa)). Positions 139–171 (QTTVNPDRIKQTLPSSPTTTKSSPSDPMTTSRA) are disordered. Residues 150–169 (TLPSSPTTTKSSPSDPMTTS) are compositionally biased toward low complexity. Serine 154 is subject to Phosphoserine. 2 KH domains span residues 171-237 (ANQV…VELI) and 421-488 (KDVV…QYLI). The interval 419–503 (GSKDVVEIAV…YEQGVRAANP (85 aa)) is required for RNA binding.

As to quaternary structure, interacts with PTBP2; the interaction is direct. As to expression, expressed in neurons of the cortex, sub-cortex, cerebellum and brainstem (at protein level). Expressed in motor neurons, but not in glia.

The protein localises to the nucleus. Functions to regulate alternative splicing in neurons by binding pre-mRNA in a sequence-specific manner to activate exon inclusion or exclusion. It binds specifically to the sequences 5'-YCAY-3' and regulates splicing in only a subset of regulated exons. Binding to an exonic 5'-YCAY-3' cluster changes the protein complexes assembled on pre-mRNA, blocking U1 snRNP binding and exon inclusion, whereas binding to an intronic 5'-YCAY-3' cluster enhances spliceosome assembly and exon inclusion. Binding to 5'-YCAY-3' clusters results in a local and asymmetric action to regulate spliceosome assembly and alternative splicing in neurons. Binding to an exonic 5'-YCAY-3' cluster changed the protein complexes assembled on pre-mRNA, blocking U1 snRNP (small nuclear ribonucleoprotein) binding and exon inclusion, whereas binding to an intronic 5'-YCAY-3' cluster enhanced spliceosome assembly and exon inclusion. With NOVA1, they perform unique biological functions in different brain areas and cell types. Autoregulates its own expression by acting as a splicing repressor. Acts to activate the inclusion of exon E3A in the glycine receptor alpha-2 chain and of exon E9 in gamma-aminobutyric-acid receptor gamma-2 subunit via a distal downstream UCAU-rich intronic splicing enhancer. Acts to regulate a novel glycine receptor alpha-2 chain splice variant (alpha-2N) in developing spinal cord. The protein is RNA-binding protein Nova-1 of Mus musculus (Mouse).